A 164-amino-acid polypeptide reads, in one-letter code: HTH-type transcriptional regulator IscR (164 aa).

Residues Arg2–Asn131 form the HTH rrf2-type domain. The segment at residues Leu28 to Lys51 is a DNA-binding region (H-T-H motif). [2Fe-2S] cluster is bound by residues Cys92, Cys98, and Cys104.

[2Fe-2S] cluster serves as cofactor.

In terms of biological role, regulates the transcription of several operons and genes involved in the biogenesis of Fe-S clusters and Fe-S-containing proteins. This is HTH-type transcriptional regulator IscR from Pectobacterium carotovorum subsp. carotovorum (strain PC1).